The following is a 305-amino-acid chain: Serine/threonine-protein phosphatase 6 catalytic subunit (305 aa).

Residues Asp54, His56, Asp82, and Asn114 each coordinate Mn(2+). The Proton donor role is filled by His115. Mn(2+)-binding residues include His164 and His238.

It belongs to the PPP phosphatase family. PP-6 (PP-V) subfamily. Mn(2+) serves as cofactor.

It catalyses the reaction O-phospho-L-seryl-[protein] + H2O = L-seryl-[protein] + phosphate. The enzyme catalyses O-phospho-L-threonyl-[protein] + H2O = L-threonyl-[protein] + phosphate. This is Serine/threonine-protein phosphatase 6 catalytic subunit (ppp6c) from Dictyostelium discoideum (Social amoeba).